Consider the following 762-residue polypeptide: Dolichyl-phosphate-mannose--protein mannosyltransferase 4 (762 aa).

Over residues 1-10 (MSVPKKRNHG) the composition is skewed to basic residues. Positions 1-24 (MSVPKKRNHGKLPPSTKDVDDPSL) are disordered. Residues 1–53 (MSVPKKRNHGKLPPSTKDVDDPSLKYTKAAPKCEQVAEHWLLQPLPEPESRYS) lie on the Lumenal side of the membrane. A helical membrane pass occupies residues 54–74 (FWVTIVTLLAFAARFYKIWYP). Residues 75–136 (KEVVFDEVHF…IGYSYETHPA (62 aa)) lie on the Cytoplasmic side of the membrane. A helical membrane pass occupies residues 137-157 (PYIAYRSFNAILGTLTVPIMF). Residues 158-166 (NTLKELNFR) are Lumenal-facing. Residues 167–187 (AITCAFASLLVAIDTAHVTET) traverse the membrane as a helical segment. The Cytoplasmic segment spans residues 188 to 189 (RL). A helical transmembrane segment spans residues 190–210 (ILLDAILIISIAATMYCYVRF). Topologically, residues 211 to 217 (YKCQLRQ) are lumenal. The chain crosses the membrane as a helical span at residues 218–238 (PFTWSWYIWLHATGLSLSFVI). Residues 239-242 (STKY) are Cytoplasmic-facing. A helical membrane pass occupies residues 243–263 (VGVMTYSAIGFAAVVNLWQLL). Residues 264 to 283 (DIKAGLSLRQFMRHFSKRLN) are Lumenal-facing. Residues 284–304 (GLVLIPFVIYLFWFWVHFTVL) form a helical membrane-spanning segment. The Cytoplasmic segment spans residues 305-593 (NTSGPGDAFM…NGDEKKQIYF (289 aa)). MIR domains lie at 331–391 (SKTV…VLPP), 399–458 (GQAV…FQPL), and 464–521 (GHVL…VDEI). The chain crosses the membrane as a helical span at residues 594 to 614 (IGNIIGWWFQVISLAVFVGII). At 615–635 (VADLITRHRGYYALNKMTREK) the chain is on the lumenal side. Residues 636–656 (LYGPLMFFFVSWCCHYFPFFL) form a helical membrane-spanning segment. Over 657–716 (MARQKFLHHYLPAHLIACLFSGALWEVIFSDCKSLDLEKDEDISGASYERNPKVYVKPYT) the chain is Cytoplasmic. Residues 717–737 (VFLVCVSCAVAWFFVYFSPLV) form a helical membrane-spanning segment. The Lumenal portion of the chain corresponds to 738–762 (YGDVSLSPSEVVSREWFDIELNFSK). N759 carries an N-linked (GlcNAc...) asparagine glycan.

Belongs to the glycosyltransferase 39 family. Forms a functional homodimer and may form a heterodimer with PMT6. Interacts with RCR1.

The protein resides in the endoplasmic reticulum membrane. It catalyses the reaction a di-trans,poly-cis-dolichyl beta-D-mannosyl phosphate + L-seryl-[protein] = 3-O-(alpha-D-mannosyl)-L-seryl-[protein] + a di-trans,poly-cis-dolichyl phosphate + H(+). The enzyme catalyses a di-trans,poly-cis-dolichyl beta-D-mannosyl phosphate + L-threonyl-[protein] = 3-O-(alpha-D-mannosyl)-L-threonyl-[protein] + a di-trans,poly-cis-dolichyl phosphate + H(+). It participates in protein modification; protein glycosylation. In terms of biological role, protein O-mannosyltransferase involved in O-glycosylation which is essential for cell wall rigidity. Forms a homodimeric complex to transfer mannose from Dol-P-mannose to Ser or Thr residues on proteins. Specifically acts on secretory proteins with an ER-luminally oriented Ser/Thr-rich region flanked by a membrane anchor such as FUS1, AXL2, GAS1, KEX2, MID2, WSC1, WSC2, OPY2, PRM5, RAX2, or YNL176. This chain is Dolichyl-phosphate-mannose--protein mannosyltransferase 4, found in Saccharomyces cerevisiae (strain ATCC 204508 / S288c) (Baker's yeast).